We begin with the raw amino-acid sequence, 472 residues long: 3-isopropylmalate dehydratase large subunit (472 aa).

C350, C411, and C414 together coordinate [4Fe-4S] cluster.

Belongs to the aconitase/IPM isomerase family. LeuC type 1 subfamily. In terms of assembly, heterodimer of LeuC and LeuD. Requires [4Fe-4S] cluster as cofactor.

The enzyme catalyses (2R,3S)-3-isopropylmalate = (2S)-2-isopropylmalate. It functions in the pathway amino-acid biosynthesis; L-leucine biosynthesis; L-leucine from 3-methyl-2-oxobutanoate: step 2/4. Functionally, catalyzes the isomerization between 2-isopropylmalate and 3-isopropylmalate, via the formation of 2-isopropylmaleate. The protein is 3-isopropylmalate dehydratase large subunit of Alcanivorax borkumensis (strain ATCC 700651 / DSM 11573 / NCIMB 13689 / SK2).